The chain runs to 87 residues: Phosphocarrier protein HPr (87 aa).

In terms of domain architecture, HPr spans 1–87 (MEKIFKVTSD…ETMKNEGLGE (87 aa)). Residue histidine 14 is the Pros-phosphohistidine intermediate; alternate of the active site. Residue histidine 14 is modified to Tele-phosphohistidine; alternate. Serine 45 carries the post-translational modification Phosphoserine; by HPrK/P.

The protein belongs to the HPr family. In terms of processing, the form phosphorylated at the tele nitrogen (N(epsilon)2), instead of the expected pros nitrogen (N(delta)1), of His-14 is not able to transfer its phosphoryl group to the B.subtilis EIIA-Glc domain. This form may be inactive in PTS-catalyzed sugar transport or target an as yet unknown acceptor molecule in an alternative metabolic process.

The protein resides in the cytoplasm. Its activity is regulated as follows. Phosphorylation on Ser-45 inhibits the phosphoryl transfer from enzyme I to HPr. Functionally, general (non sugar-specific) component of the phosphoenolpyruvate-dependent sugar phosphotransferase system (sugar PTS). This major carbohydrate active-transport system catalyzes the phosphorylation of incoming sugar substrates concomitantly with their translocation across the cell membrane. The phosphoryl group from phosphoenolpyruvate (PEP) is transferred to the phosphoryl carrier protein HPr by enzyme I. Phospho-HPr then transfers it to the PTS EIIA domain. In terms of biological role, P-Ser-HPr interacts with the catabolite control protein A (CcpA), forming a complex that binds to DNA at the catabolite response elements cre, operator sites preceding a large number of catabolite-regulated genes. Thus, P-Ser-HPr is a corepressor in carbon catabolite repression (CCR), a mechanism that allows bacteria to coordinate and optimize the utilization of available carbon sources. P-Ser-HPr mediates glucose catabolite repression of cry4A toxin expression. This chain is Phosphocarrier protein HPr (ptsH), found in Bacillus thuringiensis subsp. israelensis.